Reading from the N-terminus, the 525-residue chain is GMP synthase [glutamine-hydrolyzing] (525 aa).

Positions 9–207 (RILILDFGSQ…ILDICGCEAL (199 aa)) constitute a Glutamine amidotransferase type-1 domain. Cys86 acts as the Nucleophile in catalysis. Residues His181 and Glu183 contribute to the active site. In terms of domain architecture, GMPS ATP-PPase spans 208–400 (WTPSKIAEDA…LGLPYDMVYR (193 aa)). ATP is bound at residue 235–241 (SGGVDSS).

In terms of assembly, homodimer.

The enzyme catalyses XMP + L-glutamine + ATP + H2O = GMP + L-glutamate + AMP + diphosphate + 2 H(+). Its pathway is purine metabolism; GMP biosynthesis; GMP from XMP (L-Gln route): step 1/1. In terms of biological role, catalyzes the synthesis of GMP from XMP. The polypeptide is GMP synthase [glutamine-hydrolyzing] (Pseudomonas syringae pv. syringae (strain B728a)).